A 390-amino-acid chain; its full sequence is 5-hydroxytryptamine receptor 1B (390 aa).

The Extracellular segment spans residues M1–L46. N-linked (GlcNAc...) asparagine glycans are attached at residues N24 and N32. The chain crosses the membrane as a helical span at residues P47 to A72. Over T73–Y86 the chain is Cytoplasmic. Residues L87 to V111 traverse the membrane as a helical segment. The Extracellular portion of the chain corresponds to T112 to Q119. Residues V120–L145 traverse the membrane as a helical segment. C122 and C199 are joined by a disulfide. Residues D129 and T134 each coordinate ergotamine. Residues D146–Y148 carry the DRY motif; important for ligand-induced conformation changes and signaling motif. The Cytoplasmic segment spans residues D146 to R165. Residues A166–P184 traverse the membrane as a helical segment. Over F185–H205 the chain is Extracellular. An ergotamine-binding site is contributed by V201. A helical membrane pass occupies residues I206 to G229. Topologically, residues R230 to T315 are cytoplasmic. The span at D259–S272 shows a compositional bias: polar residues. Positions D259–S281 are disordered. The helical transmembrane segment at L316–M337 threads the bilayer. Over P338–H347 the chain is Extracellular. The helical transmembrane segment at L348–T370 threads the bilayer. The NPxxY motif; important for ligand-induced conformation changes and signaling signature appears at N365 to Y369. The Cytoplasmic segment spans residues M371 to S390. The S-palmitoyl cysteine moiety is linked to residue C388.

Belongs to the G-protein coupled receptor 1 family. As to quaternary structure, homodimer. Heterodimer with HTR1D. In terms of processing, phosphorylated. Desensitization of the receptor may be mediated by its phosphorylation. Palmitoylated. Detected in cerebral artery smooth muscle cells (at protein level). Detected in brain cortex, striatum, amygdala, medulla, hippocampus, caudate nucleus and putamen.

Its subcellular location is the cell membrane. In terms of biological role, G-protein coupled receptor for 5-hydroxytryptamine (serotonin). Also functions as a receptor for ergot alkaloid derivatives, various anxiolytic and antidepressant drugs and other psychoactive substances, such as lysergic acid diethylamide (LSD). Ligand binding causes a conformation change that triggers signaling via guanine nucleotide-binding proteins (G proteins) and modulates the activity of downstream effectors, such as adenylate cyclase. HTR1B is coupled to G(i)/G(o) G alpha proteins and mediates inhibitory neurotransmission by inhibiting adenylate cyclase activity. Arrestin family members inhibit signaling via G proteins and mediate activation of alternative signaling pathways. Regulates the release of 5-hydroxytryptamine, dopamine and acetylcholine in the brain, and thereby affects neural activity, nociceptive processing, pain perception, mood and behavior. Besides, plays a role in vasoconstriction of cerebral arteries. The protein is 5-hydroxytryptamine receptor 1B of Homo sapiens (Human).